We begin with the raw amino-acid sequence, 317 residues long: Beta-ketoacyl-[acyl-carrier-protein] synthase III (317 aa).

Active-site residues include Cys-112 and His-244. Residues 245–249 (QANLR) are ACP-binding. Residue Asn-274 is part of the active site.

Belongs to the thiolase-like superfamily. FabH family. In terms of assembly, homodimer.

The protein resides in the cytoplasm. The catalysed reaction is malonyl-[ACP] + acetyl-CoA + H(+) = 3-oxobutanoyl-[ACP] + CO2 + CoA. The protein operates within lipid metabolism; fatty acid biosynthesis. Catalyzes the condensation reaction of fatty acid synthesis by the addition to an acyl acceptor of two carbons from malonyl-ACP. Catalyzes the first condensation reaction which initiates fatty acid synthesis and may therefore play a role in governing the total rate of fatty acid production. Possesses both acetoacetyl-ACP synthase and acetyl transacylase activities. Its substrate specificity determines the biosynthesis of branched-chain and/or straight-chain of fatty acids. The chain is Beta-ketoacyl-[acyl-carrier-protein] synthase III from Blochmanniella pennsylvanica (strain BPEN).